Consider the following 625-residue polypeptide: Glutamine--fructose-6-phosphate aminotransferase [isomerizing] (625 aa).

Residue Cys2 is the Nucleophile; for GATase activity of the active site. Residues 2-229 (CGIVGFVGRT…NDQIVTITAD (228 aa)) form the Glutamine amidotransferase type-2 domain. SIS domains follow at residues 296-436 (IDES…LRGN) and 470-615 (LAQD…VDQP). The active-site For Fru-6P isomerization activity is Lys620.

Homodimer.

It is found in the cytoplasm. The catalysed reaction is D-fructose 6-phosphate + L-glutamine = D-glucosamine 6-phosphate + L-glutamate. In terms of biological role, catalyzes the first step in hexosamine metabolism, converting fructose-6P into glucosamine-6P using glutamine as a nitrogen source. The chain is Glutamine--fructose-6-phosphate aminotransferase [isomerizing] from Corynebacterium diphtheriae (strain ATCC 700971 / NCTC 13129 / Biotype gravis).